The sequence spans 224 residues: UPF0758 protein LCA_0852 (224 aa).

One can recognise an MPN domain in the interval valine 100–leucine 222. Histidine 171, histidine 173, and aspartate 184 together coordinate Zn(2+). The short motif at histidine 171–aspartate 184 is the JAMM motif element.

This sequence belongs to the UPF0758 family.

In Latilactobacillus sakei subsp. sakei (strain 23K) (Lactobacillus sakei subsp. sakei), this protein is UPF0758 protein LCA_0852.